The following is a 541-amino-acid chain: 2-hydroxyacylsphingosine 1-beta-galactosyltransferase (541 aa).

The signal sequence occupies residues 1–20 (MKSYTPYFILLWSAVGIAKA). N-linked (GlcNAc...) asparagine glycosylation is found at Asn-78, Asn-333, and Asn-442. The helical transmembrane segment at 472–492 (YFLLDIAFVLLLGAALLYFLL) threads the bilayer.

Belongs to the UDP-glycosyltransferase family.

It localises to the membrane. It is found in the endoplasmic reticulum. It carries out the reaction an N-acylsphing-4-enine + UDP-alpha-D-galactose = a beta-D-galactosyl-(1&lt;-&gt;1')-N-acylsphing-4-enine + UDP + H(+). The enzyme catalyses an N-acyl-sphingoid base + UDP-alpha-D-galactose = a D-galactosylceramide + UDP + H(+). It catalyses the reaction N-(2-hydroxy-hexanoyl)-sphing-4-enine + UDP-alpha-D-galactose = N-(2-hydroxy-hexanoyl)-beta-D-galactosyl-sphing-4-enine + UDP + H(+). The catalysed reaction is N-(2-hydroxy-hexanoyl)-sphinganine + UDP-alpha-D-galactose = N-(2-hydroxyhexanoyl)-beta-D-galactosylsphinganine + UDP + H(+). It functions in the pathway sphingolipid metabolism; galactosylceramide biosynthesis. Its function is as follows. Catalyzes the transfer of galactose to ceramide, a key enzymatic step in the biosynthesis of galactocerebrosides, which are abundant sphingolipids of the myelin membrane of the central nervous system and peripheral nervous system. Galactosylates both hydroxy- and non-hydroxy fatty acid-containing ceramides and diglycerides. The protein is 2-hydroxyacylsphingosine 1-beta-galactosyltransferase of Homo sapiens (Human).